The chain runs to 100 residues: Small ribosomal subunit protein uS14c (100 aa).

The protein belongs to the universal ribosomal protein uS14 family. Part of the 30S ribosomal subunit.

The protein resides in the plastid. The protein localises to the chloroplast. Its function is as follows. Binds 16S rRNA, required for the assembly of 30S particles. This chain is Small ribosomal subunit protein uS14c, found in Coffea arabica (Arabian coffee).